Reading from the N-terminus, the 140-residue chain is Aspartate 1-decarboxylase (140 aa).

The Schiff-base intermediate with substrate; via pyruvic acid role is filled by Ser25. Residue Ser25 is modified to Pyruvic acid (Ser). Thr57 serves as a coordination point for substrate. Tyr58 functions as the Proton donor in the catalytic mechanism. Gly73–Ala75 is a binding site for substrate.

This sequence belongs to the PanD family. Heterooctamer of four alpha and four beta subunits. Pyruvate serves as cofactor. Post-translationally, is synthesized initially as an inactive proenzyme, which is activated by self-cleavage at a specific serine bond to produce a beta-subunit with a hydroxyl group at its C-terminus and an alpha-subunit with a pyruvoyl group at its N-terminus.

The protein resides in the cytoplasm. It catalyses the reaction L-aspartate + H(+) = beta-alanine + CO2. It functions in the pathway cofactor biosynthesis; (R)-pantothenate biosynthesis; beta-alanine from L-aspartate: step 1/1. In terms of biological role, catalyzes the pyruvoyl-dependent decarboxylation of aspartate to produce beta-alanine. This is Aspartate 1-decarboxylase from Persephonella marina (strain DSM 14350 / EX-H1).